The primary structure comprises 516 residues: MSGVNSDLLHRSTLSVYNNLMDQFNPGLQKLVTLGNSYIKAFQALALTSEAYFSALAKMGEQALSTLSSRSLGDVLIQISETQRKLTAEAEGVFRWFHVEVLQAMDKNVKLDEEYIEGSRRVYELEVRNQAASLERQLRRGAFRDSLESSEYMQYLRQSQHEILKEEERRYRFLAEKHCGLTQSLLYLINKTGVSLQQRADGWKEKVSESRSSRPRTPTPLDQEAQLKSSVGSLLQTGDREMDREPLGRVPSRAPSPLPSRSRSSSVGESLGLGGGRSMRAIVSHPASSNPVLLPFARGDLLTVLIPEPRNGWLYGRHDPSLRQGWFPAAYVASTEDFLPVGLSISHRSHSMNNLLEPTSQSESDTQTYSEVSSPVVSMRRASADVRSVSPLPEKKTESNNELKSGQKVFHEIPAPATQLRRGSADVRSISPLPDRRAESHFESKVELKNYNELPPPAPPLPNSPLPERKTDLTSERPSTQGQPPEHPLFPRGSNPFATVKLRPTVTNDRSAPRIQ.

The IMD domain occupies 1–227 (MSGVNSDLLH…PTPLDQEAQL (227 aa)). The segment at 200–273 (ADGWKEKVSE…SSSVGESLGL (74 aa)) is disordered. Positions 201 to 212 (DGWKEKVSESRS) are enriched in basic and acidic residues. Residues 226–236 (QLKSSVGSLLQ) show a composition bias toward polar residues. A compositionally biased stretch (basic and acidic residues) spans 238-247 (GDREMDREPL). The span at 249–270 (RVPSRAPSPLPSRSRSSSVGES) shows a compositional bias: low complexity. An SH3 domain is found at 274 to 337 (GGGRSMRAIV…PAAYVASTED (64 aa)). Positions 355 to 376 (LLEPTSQSESDTQTYSEVSSPV) are enriched in polar residues. Residues 355–516 (LLEPTSQSES…TNDRSAPRIQ (162 aa)) form a disordered region. A compositionally biased stretch (basic and acidic residues) spans 434–450 (PDRRAESHFESKVELKN). A compositionally biased stretch (pro residues) spans 454 to 465 (LPPPAPPLPNSP).

It localises to the cell membrane. Phosphoinositides-binding protein that induces the formation of planar or gently curved membrane structures. This is BAR/IMD domain-containing adapter protein 2-like 2 (baiap2l2) from Danio rerio (Zebrafish).